A 605-amino-acid chain; its full sequence is Capsid scaffolding protein (605 aa).

Residues His52, Ser120, and His139 each act as charge relay system in the active site. The interaction with pAP stretch occupies residues 326-344 (GEFVLIPTAYYSQLLTGQT). The interaction with major capsid protein stretch occupies residues 585–605 (IQGSTADDADMFANQMMVGRC).

The protein belongs to the herpesviridae capsid scaffolding protein family. Homomultimer. Interacts with major capsid protein. As to quaternary structure, exists in a monomer-dimer equilibrium with the dimer being the active species. Capsid scaffolding protein is cleaved by assemblin after formation of the spherical procapsid. As a result, the capsid obtains its mature, icosahedral shape. Cleavages occur at two or more sites: release (R-site) and maturation (M-site).

The protein localises to the host cytoplasm. It is found in the host nucleus. The enzyme catalyses Cleaves -Ala-|-Ser- and -Ala-|-Ala- bonds in the scaffold protein.. Functionally, acts as a scaffold protein by binding major capsid protein in the cytoplasm, inducing the nuclear localization of both proteins. Multimerizes in the nucleus such as major capsid protein forms the icosahedral T=16 capsid. Autocatalytic cleavage releases the assembly protein, and subsequently abolishes interaction with major capsid protein. Cleavages products are evicted from the capsid before or during DNA packaging. In terms of biological role, protease that plays an essential role in virion assembly within the nucleus. Catalyzes the cleavage of the assembly protein after formation of the spherical procapsid. By that cleavage, the capsid matures and gains its icosahedral shape. The cleavage sites seem to include -Ala-Ser-, -Ala-Ala-, as well as Ala-Thr bonds. Assemblin and cleavages products are evicted from the capsid before or during DNA packaging. Plays a major role in capsid assembly. Acts as a scaffold protein by binding major capsid protein. Multimerizes in the nucleus such as major capsid protein forms the icosahedral T=16 capsid. Cleaved by assemblin after capsid completion. The cleavages products are evicted from the capsid before or during DNA packaging. In Varicella-zoster virus (strain Dumas) (HHV-3), this protein is Capsid scaffolding protein (33).